A 509-amino-acid chain; its full sequence is Aspartyl/glutamyl-tRNA(Asn/Gln) amidotransferase subunit B (509 aa).

This sequence belongs to the GatB/GatE family. GatB subfamily. In terms of assembly, heterotrimer of A, B and C subunits.

It carries out the reaction L-glutamyl-tRNA(Gln) + L-glutamine + ATP + H2O = L-glutaminyl-tRNA(Gln) + L-glutamate + ADP + phosphate + H(+). The catalysed reaction is L-aspartyl-tRNA(Asn) + L-glutamine + ATP + H2O = L-asparaginyl-tRNA(Asn) + L-glutamate + ADP + phosphate + 2 H(+). Functionally, allows the formation of correctly charged Asn-tRNA(Asn) or Gln-tRNA(Gln) through the transamidation of misacylated Asp-tRNA(Asn) or Glu-tRNA(Gln) in organisms which lack either or both of asparaginyl-tRNA or glutaminyl-tRNA synthetases. The reaction takes place in the presence of glutamine and ATP through an activated phospho-Asp-tRNA(Asn) or phospho-Glu-tRNA(Gln). This Psychrobacter arcticus (strain DSM 17307 / VKM B-2377 / 273-4) protein is Aspartyl/glutamyl-tRNA(Asn/Gln) amidotransferase subunit B.